A 272-amino-acid polypeptide reads, in one-letter code: uncharacterized protein (272 aa).

Helical transmembrane passes span 20 to 37, 57 to 77, 97 to 119, 155 to 177, 184 to 203, and 234 to 256; these read VYLS…NLLI, HPLT…HFSL, LNVS…IMLM, SIAT…YVIF, LVSL…VTLG, and PYSI…WLVI.

It localises to the cell membrane. This is an uncharacterized protein from Halalkalibacterium halodurans (strain ATCC BAA-125 / DSM 18197 / FERM 7344 / JCM 9153 / C-125) (Bacillus halodurans).